The chain runs to 428 residues: Hercynine oxygenase (428 aa).

H46 provides a ligand contact to Fe cation. Residue 82–85 (RASR) coordinates gamma-L-glutamyl-L-cysteine. 2 residues coordinate Fe cation: H129 and H133. D411 and R415 together coordinate gamma-L-glutamyl-L-cysteine.

This sequence belongs to the EgtB family. Monomer. The cofactor is Fe(2+).

The catalysed reaction is gamma-L-glutamyl-L-cysteine + hercynine + O2 = gamma-L-glutamyl-hercynylcysteine S-oxide + H2O. It participates in amino-acid biosynthesis; ergothioneine biosynthesis. Its function is as follows. Catalyzes the oxidative sulfurization of hercynine (N-alpha,N-alpha,N-alpha-trimethyl-L-histidine) into hercynyl-gamma-L-glutamyl-L-cysteine sulfoxide, a step in the biosynthesis pathway of ergothioneine. Cannot use the alternative thiols cysteine, N-acetylcysteine, or glutathione instead of gamma-glutamylcysteine as substrates, and histidine is a poor sulfur acceptor substrate compared to hercynine. This chain is Hercynine oxygenase, found in Mycolicibacterium smegmatis (strain ATCC 700084 / mc(2)155) (Mycobacterium smegmatis).